Consider the following 543-residue polypeptide: MAKDIKFSADARAAMVRGVDMLADTVKVTLGPKGRNVVLEKAFGSPLITNDGVTIAKEIELEDHFENMGAKLVSEVASKTNDIAGDGTTTATVLTQAIVHEGLKNVTAGANPIGIRRGIETATATAVEALKAIAQPVSGKEAIAQVAAVSSRSEKVGEYISEAMERVGNDGVITIEESRGMETELEVVEGMQFDRGYLSQYMVTDNEKMVADLENPFILITDKKVSNIQDILPLLEEVLKTNRPLLIIADDVDGEALPTLVLNKIRGTFNVVAVKAPGFGDRRKAMLEDIAILTGGTVITEDLGLELKDATMTALGQAAKITVDKDSTVIVEGSGSSEAIANRIALIKSQLETTTSDFDREKLQERLAKLAGGVAVIKVGAPTETALKEMKLRIEDALNATRAAVEEGIVAGGGTALITVIEKVAALELEGDDATGRNIVLRALEEPVRQIALNAGYEGSVVIDKLKNSPAGTGFNAATGEWVDMIKTGIIDPVKVTRSALQNAASVASLILTTEAVVANKPEPATPAPAMPAGMDPGMMGGF.

Residues 29 to 32 (TLGP), 86 to 90 (DGTTT), Gly413, 476 to 478 (NAA), and Asp492 each bind ATP.

This sequence belongs to the chaperonin (HSP60) family. In terms of assembly, forms a cylinder of 14 subunits composed of two heptameric rings stacked back-to-back. Interacts with the co-chaperonin GroES.

It localises to the cytoplasm. The enzyme catalyses ATP + H2O + a folded polypeptide = ADP + phosphate + an unfolded polypeptide.. In terms of biological role, together with its co-chaperonin GroES, plays an essential role in assisting protein folding. The GroEL-GroES system forms a nano-cage that allows encapsulation of the non-native substrate proteins and provides a physical environment optimized to promote and accelerate protein folding. The sequence is that of Chaperonin GroEL from Streptococcus pyogenes serotype M1.